A 212-amino-acid polypeptide reads, in one-letter code: Pyridoxine/pyridoxamine 5'-phosphate oxidase (212 aa).

Substrate contacts are provided by residues 8-11 (RREY) and lysine 66. FMN is bound by residues 61 to 66 (RIVLLK), 76 to 77 (FT), arginine 82, lysine 83, and glutamine 105. Tyrosine 123, arginine 127, and serine 131 together coordinate substrate. Residues 140-141 (QS) and tryptophan 185 contribute to the FMN site. 191-193 (RLH) lines the substrate pocket. Arginine 195 is a binding site for FMN.

The protein belongs to the pyridoxamine 5'-phosphate oxidase family. In terms of assembly, homodimer. The cofactor is FMN.

It catalyses the reaction pyridoxamine 5'-phosphate + O2 + H2O = pyridoxal 5'-phosphate + H2O2 + NH4(+). The enzyme catalyses pyridoxine 5'-phosphate + O2 = pyridoxal 5'-phosphate + H2O2. Its pathway is cofactor metabolism; pyridoxal 5'-phosphate salvage; pyridoxal 5'-phosphate from pyridoxamine 5'-phosphate: step 1/1. It functions in the pathway cofactor metabolism; pyridoxal 5'-phosphate salvage; pyridoxal 5'-phosphate from pyridoxine 5'-phosphate: step 1/1. In terms of biological role, catalyzes the oxidation of either pyridoxine 5'-phosphate (PNP) or pyridoxamine 5'-phosphate (PMP) into pyridoxal 5'-phosphate (PLP). This is Pyridoxine/pyridoxamine 5'-phosphate oxidase from Shewanella putrefaciens (strain CN-32 / ATCC BAA-453).